We begin with the raw amino-acid sequence, 226 residues long: ATP synthase subunit a (226 aa).

The next 7 membrane-spanning stretches (helical) occupy residues 18 to 38 (FIIGFHTLLVAVILLILARYA), 44 to 64 (VVPSGIQNVFEFIISGIISFA), 79 to 99 (LAATIAFLVFFGNAIGIIPGF), 105 to 125 (SWSFTLVLALVVFFYYHFEGI), 137 to 157 (FMGPVWWLAPLMFPVEIISHF), 177 to 197 (FLLVMLMLAPWIVPVAPFAIL), and 202 to 222 (LLQAFVFMILTYVYIHGAVVV).

It belongs to the ATPase A chain family. In terms of assembly, F-type ATPases have 2 components, CF(1) - the catalytic core - and CF(0) - the membrane proton channel. CF(1) has five subunits: alpha(3), beta(3), gamma(1), delta(1), epsilon(1). CF(0) has three main subunits: a(1), b(2) and c(9-12). The alpha and beta chains form an alternating ring which encloses part of the gamma chain. CF(1) is attached to CF(0) by a central stalk formed by the gamma and epsilon chains, while a peripheral stalk is formed by the delta and b chains.

The protein resides in the cell inner membrane. In terms of biological role, key component of the proton channel; it plays a direct role in the translocation of protons across the membrane. The sequence is that of ATP synthase subunit a from Helicobacter hepaticus (strain ATCC 51449 / 3B1).